A 602-amino-acid polypeptide reads, in one-letter code: UvrABC system protein C (602 aa).

The region spanning 17 to 94 is the GIY-YIG domain; that stretch reads KTSGCYKMYS…IKKYKPTYNI (78 aa). The UVR domain occupies 199–234; sequence SKLLNDIEIKMKEVIMKENFEAAIKLKETKKSLIEI.

The protein belongs to the UvrC family. In terms of assembly, interacts with UvrB in an incision complex.

It localises to the cytoplasm. Functionally, the UvrABC repair system catalyzes the recognition and processing of DNA lesions. UvrC both incises the 5' and 3' sides of the lesion. The N-terminal half is responsible for the 3' incision and the C-terminal half is responsible for the 5' incision. The chain is UvrABC system protein C from Borrelia duttonii (strain Ly).